The primary structure comprises 71 residues: UPF0346 protein SPG_0874 (71 aa).

This sequence belongs to the UPF0346 family.

This is UPF0346 protein SPG_0874 from Streptococcus pneumoniae serotype 19F (strain G54).